Reading from the N-terminus, the 484-residue chain is Sulfoacetaldehyde dehydrogenase (484 aa).

Residues Leu-105–Asn-110, Gly-188, and Gly-206 each bind NAD(+). The active-site Nucleophile is Cys-239. NAD(+) contacts are provided by Glu-332 and Leu-412.

It belongs to the aldehyde dehydrogenase family.

It carries out the reaction sulfoacetaldehyde + NAD(+) + CoA = sulfoacetyl-CoA + NADH + H(+). Part of a variant of the sulfo-TK pathway, a D-sulfoquinovose degradation pathway that produces sulfoacetate. Catalyzes the oxidation of sulfoacetaldehyde (SA) to sulfoacetyl-coenzyme A (sulfoacetyl-CoA). Is highly specific for NAD(+), with only residual (1%) activity with NADP(+). Cannot use acetaldehyde. The polypeptide is Sulfoacetaldehyde dehydrogenase (Acholeplasma sp).